Here is a 205-residue protein sequence, read N- to C-terminus: EFADNLDSDFKVRQFLAKELAKASVSRIVIERPAKSIRVTIHTARPGIVIGKKGEDVEKLRKVVADIAGVPAQINIAEVRKPELDAKLVADSITSQLERRVMFRRAMKRAVQNAMRLGAKGIKVDVSGRLGGAEIARTEWYREGRVPLHTLRADIDYNTSEAHTTYGVIGVKVWIFKGEILGGMAAVEQPEPAAQPKKQQRKGRK.

A KH type-2 domain is found at 12 to 80; sequence VRQFLAKELA…PAQINIAEVR (69 aa).

Belongs to the universal ribosomal protein uS3 family. Part of the 30S ribosomal subunit. Forms a tight complex with proteins S10 and S14.

In terms of biological role, binds the lower part of the 30S subunit head. Binds mRNA in the 70S ribosome, positioning it for translation. The protein is Small ribosomal subunit protein uS3 of Buchnera aphidicola subsp. Acyrthosiphon kondoi (Acyrthosiphon kondoi symbiotic bacterium).